Consider the following 414-residue polypeptide: Esterase FrsA (414 aa).

Belongs to the FrsA family.

It catalyses the reaction a carboxylic ester + H2O = an alcohol + a carboxylate + H(+). Its function is as follows. Catalyzes the hydrolysis of esters. This is Esterase FrsA from Escherichia coli O45:K1 (strain S88 / ExPEC).